The following is a 223-amino-acid chain: Ribonuclease T (223 aa).

The region spanning 20–194 (VVIDVETAGF…YDTEQTALLF (175 aa)) is the Exonuclease domain. Mg(2+)-binding residues include Asp-23, Glu-25, His-181, and Asp-186. The active-site Proton donor/acceptor is His-181.

Belongs to the RNase T family. Homodimer. The cofactor is Mg(2+).

Functionally, trims short 3' overhangs of a variety of RNA species, leaving a one or two nucleotide 3' overhang. Responsible for the end-turnover of tRNA: specifically removes the terminal AMP residue from uncharged tRNA (tRNA-C-C-A). Also appears to be involved in tRNA biosynthesis. This Cronobacter sakazakii (strain ATCC BAA-894) (Enterobacter sakazakii) protein is Ribonuclease T.